A 468-amino-acid polypeptide reads, in one-letter code: tRNA threonylcarbamoyladenosine dehydratase (468 aa).

Transmembrane regions (helical) follow at residues 15 to 35 (FWIA…TLEF), 109 to 129 (NSFV…NMLA), and 315 to 335 (ILPV…TYVL).

Belongs to the HesA/MoeB/ThiF family.

The protein localises to the mitochondrion outer membrane. Its function is as follows. Catalyzes the ATP-dependent dehydration of threonylcarbamoyladenosine at position 37 (t(6)A37) to form cyclic t(6)A37 (ct(6)A37) in tRNAs that read codons beginning with adenine. The polypeptide is tRNA threonylcarbamoyladenosine dehydratase (tcd1) (Schizosaccharomyces pombe (strain 972 / ATCC 24843) (Fission yeast)).